A 21-amino-acid polypeptide reads, in one-letter code: Pollen allergen Ole e 7 (21 aa).

The protein is Pollen allergen Ole e 7 of Olea europaea (Common olive).